The sequence spans 285 residues: Ribosomal RNA small subunit methyltransferase A (285 aa).

S-adenosyl-L-methionine is bound by residues H27, L29, G54, E75, D100, and N120.

This sequence belongs to the class I-like SAM-binding methyltransferase superfamily. rRNA adenine N(6)-methyltransferase family. RsmA subfamily.

The protein localises to the cytoplasm. The enzyme catalyses adenosine(1518)/adenosine(1519) in 16S rRNA + 4 S-adenosyl-L-methionine = N(6)-dimethyladenosine(1518)/N(6)-dimethyladenosine(1519) in 16S rRNA + 4 S-adenosyl-L-homocysteine + 4 H(+). Specifically dimethylates two adjacent adenosines (A1518 and A1519) in the loop of a conserved hairpin near the 3'-end of 16S rRNA in the 30S particle. May play a critical role in biogenesis of 30S subunits. This chain is Ribosomal RNA small subunit methyltransferase A, found in Phenylobacterium zucineum (strain HLK1).